A 603-amino-acid chain; its full sequence is UvrABC system protein C (603 aa).

Residues 15-92 (DKPGCYLMKN…IQKHQPYFNI (78 aa)) form the GIY-YIG domain. The 36-residue stretch at 197-232 (ATVKRQLTKKMQRAAENMEFERAAEIRDQLHYIEVT) folds into the UVR domain.

The protein belongs to the UvrC family. As to quaternary structure, interacts with UvrB in an incision complex.

Its subcellular location is the cytoplasm. In terms of biological role, the UvrABC repair system catalyzes the recognition and processing of DNA lesions. UvrC both incises the 5' and 3' sides of the lesion. The N-terminal half is responsible for the 3' incision and the C-terminal half is responsible for the 5' incision. The chain is UvrABC system protein C from Limosilactobacillus reuteri (strain DSM 20016) (Lactobacillus reuteri).